Here is a 436-residue protein sequence, read N- to C-terminus: Chromosomal replication initiator protein DnaA (436 aa).

The domain I, interacts with DnaA modulators stretch occupies residues 1-69; that stretch reads MLADEVLELL…AHLFEVKTGT (69 aa). A domain II region spans residues 69–99; that stretch reads TKPNVEITTQTKLKSSKQNQVNIKQIKAQST. The interval 100–314 is domain III, AAA+ region; it reads LLNPAYTFEN…SAIINLNAYA (215 aa). ATP-binding residues include Gly-144, Gly-146, Lys-147, and Thr-148. Residues 315–436 are domain IV, binds dsDNA; the sequence is NLMRQEITLD…ELKNKILTKG (122 aa).

The protein belongs to the DnaA family. In terms of assembly, oligomerizes as a right-handed, spiral filament on DNA at oriC.

It is found in the cytoplasm. Plays an essential role in the initiation and regulation of chromosomal replication. ATP-DnaA binds to the origin of replication (oriC) to initiate formation of the DNA replication initiation complex once per cell cycle. Binds the DnaA box (a 9 base pair repeat at the origin) and separates the double-stranded (ds)DNA. Forms a right-handed helical filament on oriC DNA; dsDNA binds to the exterior of the filament while single-stranded (ss)DNA is stabiized in the filament's interior. The ATP-DnaA-oriC complex binds and stabilizes one strand of the AT-rich DNA unwinding element (DUE), permitting loading of DNA polymerase. After initiation quickly degrades to an ADP-DnaA complex that is not apt for DNA replication. Binds acidic phospholipids. This is Chromosomal replication initiator protein DnaA from Campylobacter curvus (strain 525.92).